The sequence spans 393 residues: Acetylornithine aminotransferase 1 (393 aa).

Residue arginine 131 coordinates N(2)-acetyl-L-ornithine. Position 215–218 (215–218 (DEVQ)) interacts with pyridoxal 5'-phosphate. Lysine 244 carries the post-translational modification N6-(pyridoxal phosphate)lysine. Residue threonine 272 coordinates N(2)-acetyl-L-ornithine. Threonine 273 contacts pyridoxal 5'-phosphate.

Belongs to the class-III pyridoxal-phosphate-dependent aminotransferase family. ArgD subfamily. Homodimer. Pyridoxal 5'-phosphate serves as cofactor.

The protein resides in the cytoplasm. The enzyme catalyses N(2)-acetyl-L-ornithine + 2-oxoglutarate = N-acetyl-L-glutamate 5-semialdehyde + L-glutamate. It functions in the pathway amino-acid biosynthesis; L-arginine biosynthesis; N(2)-acetyl-L-ornithine from L-glutamate: step 4/4. The sequence is that of Acetylornithine aminotransferase 1 from Bordetella bronchiseptica (strain ATCC BAA-588 / NCTC 13252 / RB50) (Alcaligenes bronchisepticus).